The following is a 530-amino-acid chain: Ubiquitin carboxyl-terminal hydrolase 17-like protein 20 (530 aa).

A USP domain is found at Ala80–Lys375. The active-site Nucleophile is Cys89. The active-site Proton acceptor is the His334. Basic and acidic residues-rich tracts occupy residues Ser382–Arg392 and Asp398–Pro413. Disordered regions lie at residues Ser382 to Pro413 and Arg509 to Gln530. Residues Gly510–Arg524 show a composition bias toward basic residues.

The protein belongs to the peptidase C19 family. USP17 subfamily.

It localises to the nucleus. The protein localises to the endoplasmic reticulum. It carries out the reaction Thiol-dependent hydrolysis of ester, thioester, amide, peptide and isopeptide bonds formed by the C-terminal Gly of ubiquitin (a 76-residue protein attached to proteins as an intracellular targeting signal).. Functionally, deubiquitinating enzyme that removes conjugated ubiquitin from specific proteins to regulate different cellular processes that may include cell proliferation, progression through the cell cycle, apoptosis, cell migration, and the cellular response to viral infection. The sequence is that of Ubiquitin carboxyl-terminal hydrolase 17-like protein 20 (USP17L20) from Homo sapiens (Human).